The following is a 714-amino-acid chain: MSRIIMLIPTGTSVGLTSVSLGVIRAMERKGVRLSVFKPIAQPRAGGDAPDQTTTIVRANSTLPAAEPLKMSHVESLLSSNQKDVLMEEIIANYHANTKDAEVVLVEGLVPTRKHQFAQSLNYEIAKTLNAEIVFVMSQGTDTPEQLNERIELTRSSFGGAKNTNITGVIINKLNAPVDEQGRTRPDLSEIFDDSSKAQVIKIDPAKLQESSPLPVLGAVPWSFDLIATRAIDMARHLNATIINEGDIKTRRVKSVTFCARSIPHMLEHFRAGSLLVTSADRPDVLVAACLAAMNGVEIGALLLTGGYEMDARISKLCERAFATGLPVFMVNTNTWQTSLSLQSFNLEVPVDDHERIEKVQEYVANYVNAEWIESLTATSERSRRLSPPAFRYQLTELARKAGKRVVLPEGDEPRTVKAAAICAERGIATCVLLGNPDEINRVAASQGVELGAGIEIVDPEVVRESYVARLVELRKSKGMTEPVAREQLEDNVVLGTLMLEQDEVDGLVSGAVHTTANTIRPPLQLIKTAPGSSLVSSVFFMLLPEQVYVYGDCAINPDPTAEQLAEIAIQSADSAIAFGIEPRVAMLSYSTGTSGAGSDVEKVREATRLAQEKRPDLMIDGPLQYDAAVMADVAKSKAPNSPVAGRATVFIFPDLNTGNTTYKAVQRSADLISIGPMLQGMRKPVNDLSRGALVDDIVYTIALTAIQASQQQQ.

A phosphate acetyltransferase region spans residues 390-714 (AFRYQLTELA…TAIQASQQQQ (325 aa)).

It in the N-terminal section; belongs to the CobB/CobQ family. The protein in the C-terminal section; belongs to the phosphate acetyltransferase and butyryltransferase family. In terms of assembly, homohexamer.

Its subcellular location is the cytoplasm. The enzyme catalyses acetyl-CoA + phosphate = acetyl phosphate + CoA. It catalyses the reaction propanoyl-CoA + phosphate = propanoyl phosphate + CoA. Its pathway is metabolic intermediate biosynthesis; acetyl-CoA biosynthesis; acetyl-CoA from acetate: step 2/2. Allosterically inhibited by NADH. Involved in acetate metabolism. Catalyzes the reversible interconversion of acetyl-CoA and acetyl phosphate. The direction of the overall reaction changes depending on growth conditions. Required for acetate recapture but not for acetate excretion when this organism is grown on ethanolamine (EA); is unable to complement an eutD deletion during growth on EA. Works with proprionate kinase PduW to capture exogenous propionate and regenerate propionyl-CoA during degradation of propionate and 1,2-propanediol (1,2-PD). In Salmonella typhimurium (strain LT2 / SGSC1412 / ATCC 700720), this protein is Phosphate acetyltransferase (pta).